A 356-amino-acid chain; its full sequence is N-acyl-phosphatidylethanolamine-hydrolyzing phospholipase D 1 (356 aa).

Zn(2+)-binding residues include H144 and H146. Residue Y147 participates in an N-acyl-1,2-diacyl-sn-glycero-3-phosphoethanolamine binding. Positions 148, 149, 217, and 248 each coordinate Zn(2+). H286 contributes to the an N-acyl-1,2-diacyl-sn-glycero-3-phosphoethanolamine binding site. H308 provides a ligand contact to Zn(2+).

The protein belongs to the NAPE-PLD family. The cofactor is Zn(2+). As to expression, expressed in interneurons that are in close proximity to the primary sensory neurons. Predominantly expressed in the pharynx but can also be found in cell bodies of the dorsal and ventral nerve cords.

It carries out the reaction an N-acyl-1,2-diacyl-sn-glycero-3-phosphoethanolamine + H2O = an N-acylethanolamine + a 1,2-diacyl-sn-glycero-3-phosphate + H(+). The enzyme catalyses 1,2-dihexadecanoyl-sn-glycero-3-phospho-(N-hexadecanoyl)-ethanolamine + H2O = 1,2-dihexadecanoyl-sn-glycero-3-phosphate + N-hexadecanoylethanolamine + H(+). It catalyses the reaction N-(5Z,8Z,11Z,14Z-eicosatetraenoyl)-1,2-di-(9Z-octadecenoyl)-sn-glycero-3-phosphoethanolamine + H2O = N-(5Z,8Z,11Z,14Z-eicosatetraenoyl)-ethanolamine + 1,2-di-(9Z-octadecenoyl)-sn-glycero-3-phosphate + H(+). Functionally, D-type phospholipase that hydrolyzes N-acyl-phosphatidylethanolamines (NAPEs) to produce bioactive N-acylethanolamines/fatty acid ethanolamides (NAEs/FAEs) and phosphatidic acid. NAEs are bioactive lipids that are involved in diverse physiological processes such as growth and lifespan. This Caenorhabditis elegans protein is N-acyl-phosphatidylethanolamine-hydrolyzing phospholipase D 1.